Here is a 132-residue protein sequence, read N- to C-terminus: L-ectoine synthase (132 aa).

The protein belongs to the ectoine synthase family.

The enzyme catalyses (2S)-4-acetamido-2-aminobutanoate = L-ectoine + H2O. It participates in amine and polyamine biosynthesis; ectoine biosynthesis; L-ectoine from L-aspartate 4-semialdehyde: step 3/3. In terms of biological role, catalyzes the circularization of gamma-N-acetyl-alpha,gamma-diaminobutyric acid (ADABA) to ectoine (1,4,5,6-tetrahydro-2-methyl-4-pyrimidine carboxylic acid), which is an excellent osmoprotectant. This Bordetella avium (strain 197N) protein is L-ectoine synthase.